The primary structure comprises 127 residues: Ribonuclease P protein component 1 (127 aa).

This sequence belongs to the eukaryotic/archaeal RNase P protein component 1 family. Consists of a catalytic RNA component and at least 4 protein subunits. Forms a subcomplex with Rnp4 which stimulates the catalytic RNA.

Its subcellular location is the cytoplasm. It catalyses the reaction Endonucleolytic cleavage of RNA, removing 5'-extranucleotides from tRNA precursor.. Functionally, part of ribonuclease P, a protein complex that generates mature tRNA molecules by cleaving their 5'-ends. The RNA is catalytic, but its KM for pre-tRNA is 170-fold decreased in the presence of the 4 known protein subunits (Rnp1-4). The protein subunits also decrease the amount of Mg(2+) needed for activity. This chain is Ribonuclease P protein component 1, found in Pyrococcus furiosus (strain ATCC 43587 / DSM 3638 / JCM 8422 / Vc1).